The chain runs to 1604 residues: Putative surface cell antigen sca2 (1604 aa).

The signal sequence occupies residues 1-33; that stretch reads MSLQNSHSKKYVLTFFMSTCLLTSSFLSTSARA. Disordered regions lie at residues 324–354, 554–603, and 1183–1240; these read TTKPFTKHSRTTTNTAGISSGVPFDTGRTKP, NVNN…SNPN, and QQEN…KSLL. The span at 554–564 shows a compositional bias: low complexity; that stretch reads NVNNNSNKGQN. The span at 568-587 shows a compositional bias: pro residues; sequence ILPPTPPLNGSMPPSPPPPL. 2 stretches are compositionally biased toward basic and acidic residues: residues 1193–1213 and 1227–1240; these read SSTKDDPQPEDSNKKSEKSDS and SKNDKSSDDKKSLL. The 280-residue stretch at 1325–1604 folds into the Autotransporter domain; it reads EASINRGVWI…QGLIKLKVNL (280 aa).

The protein localises to the cell outer membrane. The polypeptide is Putative surface cell antigen sca2 (sca2) (Rickettsia felis (strain ATCC VR-1525 / URRWXCal2) (Rickettsia azadi)).